The following is a 224-amino-acid chain: Retinoschisin (224 aa).

Residues 1-23 (MSRKIEGFLLLLLFGYEATLGLS) form the signal peptide. An F5/8 type C domain is found at 63–219 (CPYHKPLGFE…IAIRMELLEC (157 aa)). 2 disulfides stabilise this stretch: Cys-63/Cys-219 and Cys-110/Cys-142.

Homooctamer of 4 homodimers; disulfide-linked. The homooctamer has a flat, cogwheel structure with a diameter of about 14 nm. Two stacked octamers can assemble to form a hexadecamer. As to expression, restricted to the retina (at protein level). Detected in the inner segment of the photoreceptors, the inner nuclear layer, the inner plexiform layer and the ganglion cell layer (at protein level). At the macula, expressed in both the outer and inner nuclear layers and in the inner plexiform layer (at protein level). Detected in retina. Detected only within the photoreceptor cell layer, most prominently within the inner segments of the photoreceptors. Undetectable in the inner plexiform layers and the inner nuclear layer.

It localises to the secreted. The protein localises to the cell membrane. Binds negatively charged membrane lipids, such as phosphatidylserine and phosphoinositides. May play a role in cell-cell adhesion processes in the retina, via homomeric interaction between octamers present on the surface of two neighboring cells. Required for normal structure and function of the retina. This chain is Retinoschisin (RS1), found in Homo sapiens (Human).